The sequence spans 604 residues: Testis-expressed protein 13C-1 (604 aa).

Disordered regions lie at residues 314–337, 374–397, 485–523, and 538–580; these read EGEG…SHKD, PVMP…RPKI, CLNA…HPRK, and ATKQ…SANC. Residues 322-333 are compositionally biased toward polar residues; that stretch reads QGTSLHGDSSNN. The span at 544-572 shows a compositional bias: basic and acidic residues; it reads KQPEGIKSLESKQPQETKSSESKQQEKPL.

Belongs to the TEX13 family.

In terms of biological role, plays a role in transcriptional repression. This is Testis-expressed protein 13C-1 from Mus musculus (Mouse).